Reading from the N-terminus, the 20-residue chain is Short cationic peptide-3a (20 aa).

A Glutamic acid 1-amide modification is found at Glu20.

In terms of tissue distribution, expressed by the venom gland.

The protein resides in the secreted. This chain is Short cationic peptide-3a, found in Cupiennius salei (American wandering spider).